The primary structure comprises 716 residues: Beta-1,2-glucosyltransferase (716 aa).

10 residues coordinate sophorose: Tyr-52, Ile-99, Ala-101, Glu-102, Asn-175, Glu-176, Gly-278, Trp-279, Glu-343, and Arg-349. Glu-176 acts as the Proton donor/acceptor in catalysis. Residues Glu-176, Gly-278, and Trp-279 each coordinate beta-D-glucose. The Nucleophile role is filled by Glu-343. Positions 349, 358, and 361 each coordinate beta-D-glucose. Tyr-378 lines the sophorose pocket. Beta-D-glucose contacts are provided by Ser-708 and Tyr-709.

The protein belongs to the glycosyl hydrolase 35 family. In terms of assembly, homidimer.

The protein localises to the cytoplasm. The enzyme catalyses a D-glucoside + [(1-&gt;2)-beta-D-glucosyl](n) = a beta-D-glucosyl-(1-&gt;2)-D-glucoside + [(1-&gt;2)-beta-D-glucosyl](n-1). In terms of biological role, glycosyltransferase acting on beta-1,2-glucooligosaccharides. Catalyzes the transfer of a glucosyl residue from the non-reducing end of a 1,2-beta-D-glucan to a glucose residue of an acceptor molecule, forming a beta-1,2-glucosidic bond. The beta-1,2-linked glucose dimer sophorose is the preferred donor in vitro. Has a very broad specificity for the acceptor and can act on various aryl- and alkyl-glucosides. Does not show any hydrolytic activity. In Ignavibacterium album (strain DSM 19864 / JCM 16511 / NBRC 101810 / Mat9-16), this protein is Beta-1,2-glucosyltransferase.